We begin with the raw amino-acid sequence, 633 residues long: Probable potassium transport system protein Kup (633 aa).

12 helical membrane passes run 21 to 41, 61 to 81, 112 to 132, 149 to 169, 176 to 196, 217 to 237, 258 to 278, 290 to 310, 348 to 368, 377 to 397, 398 to 418, and 430 to 450; these read MLVA…LYTL, ILSL…MMFV, LLVV…MITP, GIDH…FLIQ, IGIL…ALGV, FFMV…LALT, WFLL…ALLL, LLAP…ATVI, IYIG…VIGF, AYGV…SAVM, LLLW…FLLV, and IVQG…LMTT.

Belongs to the HAK/KUP transporter (TC 2.A.72) family.

The protein localises to the cell inner membrane. It carries out the reaction K(+)(in) + H(+)(in) = K(+)(out) + H(+)(out). Its function is as follows. Transport of potassium into the cell. Likely operates as a K(+):H(+) symporter. In Pseudomonas fluorescens (strain Pf0-1), this protein is Probable potassium transport system protein Kup.